Here is a 199-residue protein sequence, read N- to C-terminus: Probable GTP-binding protein EngB (199 aa).

An EngB-type G domain is found at 28-199 (DLPEIALAGR…DSWDAILEQV (172 aa)). GTP contacts are provided by residues 36-43 (GRSNVGKS), 63-67 (GKTQL), 81-84 (DVPG), 148-151 (TKAD), and 180-182 (FSS). Mg(2+) contacts are provided by serine 43 and threonine 65.

The protein belongs to the TRAFAC class TrmE-Era-EngA-EngB-Septin-like GTPase superfamily. EngB GTPase family. It depends on Mg(2+) as a cofactor.

Necessary for normal cell division and for the maintenance of normal septation. This is Probable GTP-binding protein EngB from Streptococcus pyogenes serotype M1.